Consider the following 363-residue polypeptide: 3-isopropylmalate dehydrogenase (363 aa).

An NAD(+)-binding site is contributed by 78–91 (GPKWEHLPPDQQPE). Residues R99, R109, R138, and D227 each coordinate substrate. Mg(2+)-binding residues include D227, D251, and D255. 285 to 297 (GSAPDIAGKNIAN) is a binding site for NAD(+).

This sequence belongs to the isocitrate and isopropylmalate dehydrogenases family. LeuB type 1 subfamily. As to quaternary structure, homodimer. Requires Mg(2+) as cofactor. The cofactor is Mn(2+).

Its subcellular location is the cytoplasm. The catalysed reaction is (2R,3S)-3-isopropylmalate + NAD(+) = 4-methyl-2-oxopentanoate + CO2 + NADH. It participates in amino-acid biosynthesis; L-leucine biosynthesis; L-leucine from 3-methyl-2-oxobutanoate: step 3/4. Functionally, catalyzes the oxidation of 3-carboxy-2-hydroxy-4-methylpentanoate (3-isopropylmalate) to 3-carboxy-4-methyl-2-oxopentanoate. The product decarboxylates to 4-methyl-2 oxopentanoate. The protein is 3-isopropylmalate dehydrogenase of Shigella flexneri.